A 700-amino-acid chain; its full sequence is ATP-dependent DNA helicase UvrD2 (700 aa).

The UvrD-like helicase ATP-binding domain maps to A10 to T301. ATP is bound by residues G34–R39 and R299. The UvrD-like helicase C-terminal domain occupies P302–V553. A disordered region spans residues P565 to R595. The HRDC domain occupies A626–T700.

This sequence belongs to the helicase family. UvrD subfamily. Requires Mg(2+) as cofactor.

The enzyme catalyses Couples ATP hydrolysis with the unwinding of duplex DNA by translocating in the 3'-5' direction.. The catalysed reaction is ATP + H2O = ADP + phosphate + H(+). Functionally, DNA-dependent ATPase, stimulated equally by ss- and dsDNA. Has both ATPase and helicase activities. This is ATP-dependent DNA helicase UvrD2 (uvrD2) from Mycobacterium bovis (strain ATCC BAA-935 / AF2122/97).